A 92-amino-acid polypeptide reads, in one-letter code: Protein S100-A6 (92 aa).

2 consecutive EF-hand domains span residues Leu-12–Glu-47 and Leu-48–Ile-83. Residues Thr-28 and Glu-33 each contribute to the Ca(2+) site. The residue at position 40 (Lys-40) is an N6-acetyllysine. Ca(2+)-binding residues include Asp-61, Asn-63, Asp-65, and Glu-72.

The protein belongs to the S-100 family. In terms of assembly, homodimer; head to tail assembly of 2 subunits. Interacts with CACYBP in a calcium-dependent manner. Interacts with ANXA2 and ANXA11 (via N-terminus). Interacts with SUGT1. Interacts with TP53; has higher affinity for TP53 that is phosphorylated on its N-terminal domain, and lower affinity for TP53 that is phosphorylated on its C-terminal domain. Interacts with tropomyosin. Interacts with FKBP4. Interacts with PPP5C (via TPR repeats); the interaction is calcium-dependent and modulates PPP5C activity. Interacts with TPPP; this interaction inhibits TPPP dimerization.

The protein localises to the nucleus envelope. It is found in the cytoplasm. Its subcellular location is the cell membrane. In terms of biological role, may function as calcium sensor and modulator, contributing to cellular calcium signaling. May function by interacting with other proteins, such as TPR-containing proteins, and indirectly play a role in many physiological processes such as the reorganization of the actin cytoskeleton and in cell motility. Binds 2 calcium ions. Calcium binding is cooperative. The sequence is that of Protein S100-A6 (S100A6) from Equus caballus (Horse).